We begin with the raw amino-acid sequence, 563 residues long: BOS complex subunit NCLN (563 aa).

The N-terminal stretch at 1 to 42 is a signal peptide; sequence MLEEAGEVLENMLKASCLPLGFIVFLPAVLLLVAPPLPAADA. Over 43-522 the chain is Lumenal; that stretch reads AHEFTVYRMQ…VMNAYRVKPA (480 aa). 2 N-linked (GlcNAc...) asparagine glycosylation sites follow: asparagine 241 and asparagine 428. Residues 523 to 543 form a helical membrane-spanning segment; sequence VFDLLLAVGIAAYLGMAYVAV. The Cytoplasmic portion of the chain corresponds to 544–563; it reads QHFSLLYKTVQRLLVKAKTQ.

The protein belongs to the nicastrin family. As to quaternary structure, component of the back of Sec61 (BOS) complex, composed of NCLN/Nicalin, NOMO (NOMO1, NOMO2 or NOMO3) and TMEM147. The BOS complex is part of the multi-pass translocon (MPT) complex, composed of three subcomplexes, the GEL complex (composed of RAB5IF/OPTI and TMCO1), the BOS complex (composed of NCLN/Nicalin, NOMO and TMEM147) and the PAT complex (composed of WDR83OS/Asterix and CCDC47). The MPT complex associates with the SEC61 complex. Highly expressed in pancreas and skeletal muscle and, at lower levels, in heart.

It localises to the endoplasmic reticulum membrane. Component of the multi-pass translocon (MPT) complex that mediates insertion of multi-pass membrane proteins into the lipid bilayer of membranes. The MPT complex takes over after the SEC61 complex: following membrane insertion of the first few transmembrane segments of proteins by the SEC61 complex, the MPT complex occludes the lateral gate of the SEC61 complex to promote insertion of subsequent transmembrane regions. May antagonize Nodal signaling and subsequent organization of axial structures during mesodermal patterning, via its interaction with NOMO. The polypeptide is BOS complex subunit NCLN (Homo sapiens (Human)).